Reading from the N-terminus, the 66-residue chain is Large ribosomal subunit protein bL33c (66 aa).

It belongs to the bacterial ribosomal protein bL33 family.

It is found in the plastid. The protein resides in the chloroplast. This chain is Large ribosomal subunit protein bL33c, found in Cycas taitungensis (Prince sago).